Consider the following 427-residue polypeptide: Enolase (427 aa).

(2R)-2-phosphoglycerate is bound at residue Gln163. Glu205 (proton donor) is an active-site residue. Mg(2+) is bound by residues Asp242, Glu285, and Asp312. (2R)-2-phosphoglycerate contacts are provided by Lys337, Arg366, Ser367, and Lys388. The Proton acceptor role is filled by Lys337.

This sequence belongs to the enolase family. Mg(2+) is required as a cofactor.

It localises to the cytoplasm. The protein localises to the secreted. It is found in the cell surface. It catalyses the reaction (2R)-2-phosphoglycerate = phosphoenolpyruvate + H2O. Its pathway is carbohydrate degradation; glycolysis; pyruvate from D-glyceraldehyde 3-phosphate: step 4/5. In terms of biological role, catalyzes the reversible conversion of 2-phosphoglycerate (2-PG) into phosphoenolpyruvate (PEP). It is essential for the degradation of carbohydrates via glycolysis. This is Enolase from Azorhizobium caulinodans (strain ATCC 43989 / DSM 5975 / JCM 20966 / LMG 6465 / NBRC 14845 / NCIMB 13405 / ORS 571).